The following is a 139-amino-acid chain: Putative pre-16S rRNA nuclease (139 aa).

The protein belongs to the YqgF nuclease family.

The protein resides in the cytoplasm. Its function is as follows. Could be a nuclease involved in processing of the 5'-end of pre-16S rRNA. This chain is Putative pre-16S rRNA nuclease, found in Pectobacterium atrosepticum (strain SCRI 1043 / ATCC BAA-672) (Erwinia carotovora subsp. atroseptica).